The following is a 1001-amino-acid chain: Ribonuclease E/G-like protein, chloroplastic (1001 aa).

Residues 1–48 (MDVTEVPWRRLPQFSVSSRASWLVSSGFPLSSYMFSHVERGKTFRLTL) constitute a chloroplast transit peptide. In terms of domain architecture, CBM20 spans 76 to 185 (SRLKGLCEVV…KIIIRDSWMS (110 aa)). Residue aspartate 755 participates in Mg(2+) binding. The stretch at 769-789 (QEKAILEVNLAAARQIAREIR) forms a coiled coil. Residue aspartate 800 coordinates Mg(2+). 2 residues coordinate Zn(2+): cysteine 858 and cysteine 861.

The protein belongs to the RNase E/G family. As to quaternary structure, part of a chloroplastic degradosome-like complex. Interacts with RHON1. A homotetramer formed by a dimer of dimers. Requires Mg(2+) as cofactor. The cofactor is Zn(2+). As to expression, expressed in cotyledons, rosette and cauline leaves.

It localises to the plastid. Its subcellular location is the chloroplast stroma. Functionally, involved in intercistronic processing of primary transcripts from chloroplast operons. The endonucleolytic activity of the enzyme depends on the number of phosphates at the 5' end, is inhibited by structured RNA, and preferentially cleaves A/U-rich sequences. The chain is Ribonuclease E/G-like protein, chloroplastic (RNE) from Arabidopsis thaliana (Mouse-ear cress).